A 316-amino-acid chain; its full sequence is Transaldolase A (316 aa).

The active-site Schiff-base intermediate with substrate is Lys-131.

This sequence belongs to the transaldolase family. Type 1 subfamily. In terms of assembly, homodimer.

It is found in the cytoplasm. The catalysed reaction is D-sedoheptulose 7-phosphate + D-glyceraldehyde 3-phosphate = D-erythrose 4-phosphate + beta-D-fructose 6-phosphate. It participates in carbohydrate degradation; pentose phosphate pathway; D-glyceraldehyde 3-phosphate and beta-D-fructose 6-phosphate from D-ribose 5-phosphate and D-xylulose 5-phosphate (non-oxidative stage): step 2/3. Transaldolase is important for the balance of metabolites in the pentose-phosphate pathway. This chain is Transaldolase A, found in Salmonella typhimurium (strain LT2 / SGSC1412 / ATCC 700720).